Consider the following 506-residue polypeptide: Acrylate reductase flavoprotein subunit (506 aa).

Residues 1-30 (MSNKDLLGRRNFIKGMGAAAGVAMAAPALA) constitute a signal peptide (tat-type signal). The FAD site is built by alanine 54, glutamate 74, asparagine 82, glycine 87, and glycine 88. Residue arginine 333 is the Proton donor of the active site. Residues glutamate 473 and isoleucine 489 each coordinate FAD.

This sequence belongs to the FAD-dependent oxidoreductase 2 family. FRD/SDH subfamily. In terms of assembly, the ArdAB flavocytochrome c is composed of a FAD-containing subunit (ArdA) and a heme c-containing subunit (ArdB). Requires FAD as cofactor. In terms of processing, predicted to be exported by the Tat system. The position of the signal peptide cleavage has not been experimentally proven.

Its subcellular location is the periplasm. With respect to regulation, methacrylate acts as a competitive inhibitor of the acrylate reductase activity and suppresses the reductase activity in dose-dependent manner. Its function is as follows. FAD-containing subunit of the ArdAB flavocytochrome c, which catalyzes the reduction of acrylate to propanoate and supports dimethylsulfoniopropionate-dependent anaerobic respiration. In vitro, can use the artificial electron donor methyl viologen. The natural electron donor is probably a low-potential cytochrome c. Also shows weak activity toward methacrylate in vitro (at a 22-fold lower rate) but cannot use other tested 2-enoates, including crotonic, fumaric, sorbic, urocanic, cinnamic, p-coumaric, caffeic or ferulic acids. The protein catalyzes a unidirectional reaction and cannot oxidize propanoate with phenazine metasulfate and dichlorophenolindophenol as electron acceptors. The polypeptide is Acrylate reductase flavoprotein subunit (Shewanella woodyi (strain ATCC 51908 / MS32)).